The chain runs to 161 residues: SsrA-binding protein (161 aa).

The protein belongs to the SmpB family.

It is found in the cytoplasm. Required for rescue of stalled ribosomes mediated by trans-translation. Binds to transfer-messenger RNA (tmRNA), required for stable association of tmRNA with ribosomes. tmRNA and SmpB together mimic tRNA shape, replacing the anticodon stem-loop with SmpB. tmRNA is encoded by the ssrA gene; the 2 termini fold to resemble tRNA(Ala) and it encodes a 'tag peptide', a short internal open reading frame. During trans-translation Ala-aminoacylated tmRNA acts like a tRNA, entering the A-site of stalled ribosomes, displacing the stalled mRNA. The ribosome then switches to translate the ORF on the tmRNA; the nascent peptide is terminated with the 'tag peptide' encoded by the tmRNA and targeted for degradation. The ribosome is freed to recommence translation, which seems to be the essential function of trans-translation. This chain is SsrA-binding protein, found in Mycolicibacterium smegmatis (strain ATCC 700084 / mc(2)155) (Mycobacterium smegmatis).